The primary structure comprises 178 residues: MIITVGGLPGTGTTTTSKLLSEKYGLNHVCAGFIFRDMAKEMNMTLQEFSSYAETNTEVDNEIDRRQVEAAQSGDLILEGRLAGWILKRSDIKPDLSIWLKADPMVRCIRISERENENVDLALEKMISREASEKKRYKEIYNIEIDDLSIYDLTIESSKWDAKGVFNIIEKAIDNLKA.

Position 7–15 (7–15 (GLPGTGTTT)) interacts with ATP.

The protein belongs to the cytidylate kinase family. Type 2 subfamily.

It is found in the cytoplasm. The catalysed reaction is CMP + ATP = CDP + ADP. It catalyses the reaction dCMP + ATP = dCDP + ADP. In Methanococcus maripaludis (strain DSM 14266 / JCM 13030 / NBRC 101832 / S2 / LL), this protein is Cytidylate kinase.